Reading from the N-terminus, the 86-residue chain is Small ribosomal subunit protein bS20 (86 aa).

This sequence belongs to the bacterial ribosomal protein bS20 family.

Functionally, binds directly to 16S ribosomal RNA. The sequence is that of Small ribosomal subunit protein bS20 from Buchnera aphidicola subsp. Cinara cedri (strain Cc).